The primary structure comprises 405 residues: 8-amino-7-oxononanoate synthase 1 (405 aa).

Residue arginine 29 coordinates substrate. 116–117 (GY) lines the pyridoxal 5'-phosphate pocket. Histidine 141 lines the substrate pocket. Residues serine 187, histidine 215, and threonine 247 each contribute to the pyridoxal 5'-phosphate site. Position 250 is an N6-(pyridoxal phosphate)lysine (lysine 250). Position 368 (threonine 368) interacts with substrate.

This sequence belongs to the class-II pyridoxal-phosphate-dependent aminotransferase family. BioF subfamily. As to quaternary structure, homodimer. It depends on pyridoxal 5'-phosphate as a cofactor.

It catalyses the reaction 6-carboxyhexanoyl-[ACP] + L-alanine + H(+) = (8S)-8-amino-7-oxononanoate + holo-[ACP] + CO2. The protein operates within cofactor biosynthesis; biotin biosynthesis. Its function is as follows. Catalyzes the decarboxylative condensation of pimeloyl-[acyl-carrier protein] and L-alanine to produce 8-amino-7-oxononanoate (AON), [acyl-carrier protein], and carbon dioxide. The chain is 8-amino-7-oxononanoate synthase 1 from Polaromonas sp. (strain JS666 / ATCC BAA-500).